The primary structure comprises 388 residues: Succinate--CoA ligase [ADP-forming] subunit beta (388 aa).

One can recognise an ATP-grasp domain in the interval 9-244; it reads KQLFARYGMP…PSQEDAREAH (236 aa). Residues Lys46, 53–55, Glu99, Thr102, and Glu107 each bind ATP; that span reads GRG. Mg(2+) is bound by residues Asn199 and Asp213. Substrate is bound by residues Asn264 and 321–323; that span reads GIV.

It belongs to the succinate/malate CoA ligase beta subunit family. As to quaternary structure, heterotetramer of two alpha and two beta subunits. Mg(2+) is required as a cofactor.

The catalysed reaction is succinate + ATP + CoA = succinyl-CoA + ADP + phosphate. The enzyme catalyses GTP + succinate + CoA = succinyl-CoA + GDP + phosphate. The protein operates within carbohydrate metabolism; tricarboxylic acid cycle; succinate from succinyl-CoA (ligase route): step 1/1. Its function is as follows. Succinyl-CoA synthetase functions in the citric acid cycle (TCA), coupling the hydrolysis of succinyl-CoA to the synthesis of either ATP or GTP and thus represents the only step of substrate-level phosphorylation in the TCA. The beta subunit provides nucleotide specificity of the enzyme and binds the substrate succinate, while the binding sites for coenzyme A and phosphate are found in the alpha subunit. The polypeptide is Succinate--CoA ligase [ADP-forming] subunit beta (Yersinia pseudotuberculosis serotype O:1b (strain IP 31758)).